A 285-amino-acid chain; its full sequence is Glycine--tRNA ligase alpha subunit (285 aa).

This sequence belongs to the class-II aminoacyl-tRNA synthetase family. As to quaternary structure, tetramer of two alpha and two beta subunits.

Its subcellular location is the cytoplasm. The enzyme catalyses tRNA(Gly) + glycine + ATP = glycyl-tRNA(Gly) + AMP + diphosphate. The protein is Glycine--tRNA ligase alpha subunit of Thermodesulfovibrio yellowstonii (strain ATCC 51303 / DSM 11347 / YP87).